The primary structure comprises 575 residues: Sodium/calcium exchanger NCL2 (575 aa).

Helical transmembrane passes span 69–89 (FLPCTTTAWGNLFLVLAYGFL), 112–132 (IVGGLFLPILGALPDALLILV), and 146–166 (VLIGMGLLAGSTVMLLTLLWG). N-linked (GlcNAc...) asparagine glycosylation occurs at N179. The next 2 membrane-spanning stretches (helical) occupy residues 210–230 (IMAISILPFIIVQIPKIFKLH) and 237–257 (VLIGLIVAALLLLSYCLYQVF). EF-hand domains follow at residues 297–332 (PNVSVIEKLFHRIDQDNDGKLERGELQAFIVGINFE) and 337–372 (NSNLAADQVMADFDTSRNHFIEKGEFVNGMLRWLDE). N-linked (GlcNAc...) asparagine glycosylation is present at N298. The Ca(2+) site is built by D310, D312, D314, K316, E321, D350, S352, N354, and E361. 5 helical membrane-spanning segments follow: residues 417-437 (WTCIKAILLLLLGTAMAAASA), 457-477 (FISFIVMPLATNSSEAVSAII), 494-514 (VYGGVTMNNTLCLAVFLALVY), 522-542 (FSSEVLIILLVCIIMGLFTSF), and 548-568 (LWTCFVAFLLYPLSLIMVYIL).

Belongs to the Ca(2+):cation antiporter (CaCA) (TC 2.A.19) family.

The protein resides in the cell membrane. In terms of biological role, may function as a sodium/calcium exchanger (NCX) and participate in the maintenance of calcium homeostasis. May play a role abiotic stress responses. The protein is Sodium/calcium exchanger NCL2 of Oryza sativa subsp. japonica (Rice).